Consider the following 179-residue polypeptide: Ribosome maturation factor RimP (179 aa).

Belongs to the RimP family.

It is found in the cytoplasm. Required for maturation of 30S ribosomal subunits. The sequence is that of Ribosome maturation factor RimP from Chlorobium chlorochromatii (strain CaD3).